A 413-amino-acid chain; its full sequence is Heparan-sulfate 6-O-sulfotransferase 1-A (413 aa).

Topologically, residues 9-15 are cytoplasmic; that stretch reads MVERSSK. A helical; Signal-anchor for type II membrane protein transmembrane segment spans residues 16 to 36; sequence FLFIVVGSVLFMLILYQYVAP. At 37 to 413 the chain is on the lumenal side; the sequence is GMMNFGSPHG…DYMNHIINRW (377 aa). Position 92-100 (92-100) interacts with 3'-phosphoadenylyl sulfate; the sequence is HIQKTGGTT. Substrate-binding positions include 122-123, Arg-139, Trp-144, and His-149; that span reads KK. His-149 serves as the catalytic Proton acceptor. Positions 183 and 191 each coordinate 3'-phosphoadenylyl sulfate. 2 residues coordinate substrate: His-195 and Trp-202. Residue Asn-262 is glycosylated (N-linked (GlcNAc...) asparagine). 315–317 is a binding site for 3'-phosphoadenylyl sulfate; sequence MQY. An N-linked (GlcNAc...) asparagine glycan is attached at Asn-318. 3'-phosphoadenylyl sulfate is bound at residue 321–322; sequence RA. Asn-329 carries N-linked (GlcNAc...) asparagine glycosylation. Residues 374–401 are disordered; the sequence is PLFPFRRTSSSDSTFRDDAPESEGSRLP.

This sequence belongs to the sulfotransferase 6 family. In terms of tissue distribution, during somitogenesis, first expressed in polster and presumptive forebrain. During mid-somitogenesis, expressed in eye, hindbrain and anterior spinal cord. During late somitogenesis, strong expression in eye and hindbrain, decreased levels in midbrain and anterior spinal cord. At 24 hours post-fertilization (hpf), expressed in neural retina and lens, brain and anterior spinal cord. At 36 hpf, retinal expression is confined to the ciliary marginal zone and there is strong expression in tectum, rhombomeres and otic vesicle. At 48 hpf, expressed in retinal ganglion cells and in tectum, rhombomeres and pectoral fin. Not detected in the vasculature during embryogenesis.

It localises to the membrane. The catalysed reaction is alpha-D-glucosaminyl-[heparan sulfate](n) + 3'-phosphoadenylyl sulfate = 6-sulfo-alpha-D-glucosaminyl-[heparan sulfate](n) + adenosine 3',5'-bisphosphate + H(+). Functionally, 6-O-sulfation enzyme which catalyzes the transfer of sulfate from 3'-phosphoadenosine 5'-phosphosulfate (PAPS) to position 6 of the N-sulfoglucosamine residue (GlcNS) of heparan sulfate. The chain is Heparan-sulfate 6-O-sulfotransferase 1-A from Danio rerio (Zebrafish).